Consider the following 275-residue polypeptide: Large ribosomal subunit protein uL2c (275 aa).

The tract at residues 225-256 (AMNAVDHPHGGGEGRSPIGRSQPSTPWGRPAL) is disordered.

It belongs to the universal ribosomal protein uL2 family. In terms of assembly, part of the 50S ribosomal subunit.

It localises to the plastid. It is found in the chloroplast. The polypeptide is Large ribosomal subunit protein uL2c (rpl2) (Cyanidium caldarium (Red alga)).